The chain runs to 294 residues: Lipoyl synthase 1 (294 aa).

Residues C38, C43, C49, C64, C68, C71, and S279 each coordinate [4Fe-4S] cluster. The 219-residue stretch at 50–268 (FAGGTATFLI…EEGQTRFGFL (219 aa)) folds into the Radical SAM core domain.

Belongs to the radical SAM superfamily. Lipoyl synthase family. [4Fe-4S] cluster is required as a cofactor.

It is found in the cytoplasm. It catalyses the reaction [[Fe-S] cluster scaffold protein carrying a second [4Fe-4S](2+) cluster] + N(6)-octanoyl-L-lysyl-[protein] + 2 oxidized [2Fe-2S]-[ferredoxin] + 2 S-adenosyl-L-methionine + 4 H(+) = [[Fe-S] cluster scaffold protein] + N(6)-[(R)-dihydrolipoyl]-L-lysyl-[protein] + 4 Fe(3+) + 2 hydrogen sulfide + 2 5'-deoxyadenosine + 2 L-methionine + 2 reduced [2Fe-2S]-[ferredoxin]. The protein operates within protein modification; protein lipoylation via endogenous pathway; protein N(6)-(lipoyl)lysine from octanoyl-[acyl-carrier-protein]: step 2/2. In terms of biological role, catalyzes the radical-mediated insertion of two sulfur atoms into the C-6 and C-8 positions of the octanoyl moiety bound to the lipoyl domains of lipoate-dependent enzymes, thereby converting the octanoylated domains into lipoylated derivatives. The protein is Lipoyl synthase 1 of Prochlorococcus marinus (strain SARG / CCMP1375 / SS120).